A 514-amino-acid polypeptide reads, in one-letter code: 2-isopropylmalate synthase (514 aa).

The Pyruvate carboxyltransferase domain maps to 5 to 267; sequence LVIFDTTLRD…DTRIHTPEIL (263 aa). Residues D14, H202, H204, and N238 each contribute to the Mn(2+) site. A regulatory domain region spans residues 394–514; sequence RLVALKVGTQ…GSKEHPQAHV (121 aa).

Belongs to the alpha-IPM synthase/homocitrate synthase family. LeuA type 1 subfamily. In terms of assembly, homodimer. It depends on Mn(2+) as a cofactor.

The protein localises to the cytoplasm. It catalyses the reaction 3-methyl-2-oxobutanoate + acetyl-CoA + H2O = (2S)-2-isopropylmalate + CoA + H(+). The protein operates within amino-acid biosynthesis; L-leucine biosynthesis; L-leucine from 3-methyl-2-oxobutanoate: step 1/4. Its function is as follows. Catalyzes the condensation of the acetyl group of acetyl-CoA with 3-methyl-2-oxobutanoate (2-ketoisovalerate) to form 3-carboxy-3-hydroxy-4-methylpentanoate (2-isopropylmalate). This is 2-isopropylmalate synthase from Hydrogenovibrio crunogenus (strain DSM 25203 / XCL-2) (Thiomicrospira crunogena).